A 173-amino-acid polypeptide reads, in one-letter code: Lipoprotein signal peptidase (173 aa).

The next 4 membrane-spanning stretches (helical) occupy residues 24–44 (PWLGLGVIWILLDQLTKIAIL), 55–75 (ITGFFNLVLAYNRGAAFSFLA), 80–100 (WQRWFFTGLGVAAALFIVWLL), and 105–125 (GQKLFCFALALILGGALGNVI). Active-site residues include D135 and D153. A helical transmembrane segment spans residues 145 to 165 (HWPAFNVADCGICIGAVLLII).

This sequence belongs to the peptidase A8 family.

Its subcellular location is the cell inner membrane. The catalysed reaction is Release of signal peptides from bacterial membrane prolipoproteins. Hydrolyzes -Xaa-Yaa-Zaa-|-(S,diacylglyceryl)Cys-, in which Xaa is hydrophobic (preferably Leu), and Yaa (Ala or Ser) and Zaa (Gly or Ala) have small, neutral side chains.. It participates in protein modification; lipoprotein biosynthesis (signal peptide cleavage). Functionally, this protein specifically catalyzes the removal of signal peptides from prolipoproteins. In Ralstonia nicotianae (strain ATCC BAA-1114 / GMI1000) (Ralstonia solanacearum), this protein is Lipoprotein signal peptidase.